An 869-amino-acid polypeptide reads, in one-letter code: Leucine--tRNA ligase (869 aa).

Residues 51 to 61 (PYPSGRIHMGH) carry the 'HIGH' region motif. The 'KMSKS' region signature appears at 636-640 (KMSKS). Residue K639 participates in ATP binding.

Belongs to the class-I aminoacyl-tRNA synthetase family.

The protein localises to the cytoplasm. The enzyme catalyses tRNA(Leu) + L-leucine + ATP = L-leucyl-tRNA(Leu) + AMP + diphosphate. In Dinoroseobacter shibae (strain DSM 16493 / NCIMB 14021 / DFL 12), this protein is Leucine--tRNA ligase.